We begin with the raw amino-acid sequence, 314 residues long: MAEVQRYALVTGANKGIGFEICRQLAEKGIIVILTSRNEKRGLEARQKLLKELNVSENRLVFHQLDVTDLASVAAVAVFIKSKFGKLDILVNNAGVSGVEMVGDVSVFNEYIEADFKALQALEAGAKEEPPFKPKANGEMIEKFEGAKDCVVTNYYGPKRLTQALIPLLQLSPSPRIVNVSSSFGSLLLLWNEWAKGVLGDEDRLTEERVDEVVEVFLKDIKEGKLEESQWPPHFAAERVSKAALNAYTKIAAKKYPSFRINAICPGYAKTDITFHAGPLSVAEAAQVPVKLALLPDGGPSGCFFPRDKALALY.

10 to 33 (VTGANKGIGFEICRQLAEKGIIVI) is an NADP(+) binding site. Substrate is bound at residue S182.

The protein belongs to the short-chain dehydrogenases/reductases (SDR) family.

Its subcellular location is the cytoplasm. The enzyme catalyses (2R,5R)-isopulegone + NADP(+) = (6R)-isopiperitenone + NADPH + H(+). It functions in the pathway secondary metabolite biosynthesis; terpenoid biosynthesis. In terms of biological role, monoterpene synthase that catalyzes the specific reduction of the 1(2)-double bond of (-)-isopiperitenone to produce (+)-cis-isopulegone. Does not catalyze the reverse reaction. Unable to reduce (+)-pulegone, (+)-cis-isopulegone, (-)-menthone or the 1,2-double bond of (-)-carvone. Able to utilize NADH with 20% the efficiency of NADPH. The chain is (-)-isopiperitenone reductase from Mentha piperita (Peppermint).